The primary structure comprises 321 residues: 4-hydroxy-2-oxoglutarate aldolase, mitochondrial (321 aa).

The transit peptide at 1–23 directs the protein to the mitochondrion; that stretch reads MLGPQIWASMRQGLSRGLSRNVK. A substrate-binding site is contributed by 71–72; sequence ST. Catalysis depends on K190, which acts as the Schiff-base intermediate with substrate. Residues S192 and G216 each coordinate substrate.

The protein belongs to the DapA family. In terms of assembly, homotetramer.

Its subcellular location is the mitochondrion. It carries out the reaction (4S)-4-hydroxy-2-oxoglutarate = glyoxylate + pyruvate. The catalysed reaction is (4R)-4-hydroxy-2-oxoglutarate = glyoxylate + pyruvate. With respect to regulation, inhibited by divalent cations. Its function is as follows. Catalyzes the final step in the metabolic pathway of hydroxyproline. This Mus musculus (Mouse) protein is 4-hydroxy-2-oxoglutarate aldolase, mitochondrial (Hoga1).